A 931-amino-acid polypeptide reads, in one-letter code: Short transient receptor potential channel 6 (931 aa).

The tract at residues Met1–Ala24 is disordered. Topologically, residues Met1–Lys406 are cytoplasmic. Residues Gly13 to Ala24 show a composition bias toward low complexity. ANK repeat units follow at residues Met131–Val160, Asp162–Gly188, and His217–Arg246. A helical transmembrane segment spans residues Phe407–Ala427. Residues Pro428 to Gly438 are Extracellular-facing. The helical transmembrane segment at Pro439–Met459 threads the bilayer. The Cytoplasmic segment spans residues Asn460 to Lys487. A helical membrane pass occupies residues Thr488–Ala508. The Extracellular segment spans residues Glu509–Tyr521. Residues Leu522 to Ile542 traverse the membrane as a helical segment. At Ala543–Gln592 the chain is on the cytoplasmic side. A helical membrane pass occupies residues Ile593–Ile613. Residues Leu614 to Lys636 lie on the Extracellular side of the membrane. An N-linked (GlcNAc...) asparagine glycan is attached at Asn617. The stretch at Glu618–Ala647 is one ANK 4 repeat. The helical transmembrane segment at Phe637–Ser657 threads the bilayer. Residues Tyr658 to Ser674 are Cytoplasmic-facing. A helical transmembrane segment spans residues Phe675–Tyr695. Over Asn696 to Val706 the chain is Extracellular. Residues Leu707 to Ile727 traverse the membrane as a helical segment. Topologically, residues Asn728–Arg931 are cytoplasmic. The residue at position 815 (Ser815) is a Phosphoserine.

Belongs to the transient receptor (TC 1.A.4) family. STrpC subfamily. TRPC6 sub-subfamily. As to quaternary structure, homodimer; forms channel complex. Interacts with MX1 and RNF24. Phosphorylated by FYN, leading to an increase of TRPC6 channel activity.

It is found in the cell membrane. It carries out the reaction Ca(2+)(in) = Ca(2+)(out). Its function is as follows. Thought to form a receptor-activated non-selective calcium permeant cation channel. Probably is operated by a phosphatidylinositol second messenger system activated by receptor tyrosine kinases or G-protein coupled receptors. Activated by diacylglycerol (DAG) in a membrane-delimited fashion, independently of protein kinase C. Seems not to be activated by intracellular calcium store depletion. This Bos taurus (Bovine) protein is Short transient receptor potential channel 6.